A 2167-amino-acid polypeptide reads, in one-letter code: Myosin-VIIa (2167 aa).

The 671-residue stretch at 63–733 (QGVEDMISLG…HDLFLEQERD (671 aa)) folds into the Myosin motor domain. Residue 156-163 (GESGAGKT) coordinates ATP. 2 actin-binding regions span residues 612 to 634 (LDALMKTLSSCQPFFIRCIKPNE) and 712 to 726 (QLGHTKVFLKDAHDL). IQ domains are found at residues 736 to 758 (LTRKILILQRSIRGWVYRRRFLR), 759 to 788 (LRAAAITVQRFWKGYAQRKRYRNMRVGYMR), 805 to 827 (LRGHIVGLQAHARGYLVRREYGH), and 828 to 857 (KMWAVIKIQSHVRRMIAMRRYRKLRLEHKQ). A coiled-coil region spans residues 886-919 (QHYRDRLHELERREIQEQLENRRRVEVNMNIIND). Residues 1008–1245 (YAKKALKHPL…PSWLELQATK (238 aa)) enclose the MyTH4 1 domain. Residues 1250–1560 (IMLPITFMDG…YFLDGLKKRS (311 aa)) enclose the FERM 1 domain. The region spanning 1558–1627 (KRSKYVIALQ…PAETVYVLPT (70 aa)) is the SH3 domain. A phosphoserine mark is found at Ser1651 and Ser1654. The MyTH4 2 domain occupies 1701 to 1849 (YSRDPIKAPL…PHQVEVEAIQ (149 aa)). Residues 1855-2158 (IFHKVYFPDD…SYISLMLTNM (304 aa)) form the FERM 2 domain. A Phosphothreonine modification is found at Thr2045.

It belongs to the TRAFAC class myosin-kinesin ATPase superfamily. Myosin family. As to quaternary structure, homodimerizes in a two headed molecule through the formation of a coiled-coil rod. Homodimers motility is approximately 8-10 times slower than that of myosin V, and its step size is 30 nm, which is consistent with the presence of five IQ motifs in its neck region. Interacts with Cad99C (via the cytoplasmic domain). Interacts with zip and Sans. As to expression, expressed in the setae, micro- and macrochaetae on the head, thorax and wing.

Its subcellular location is the cytoplasm. It localises to the cell cortex. The protein localises to the cell projection. It is found in the microvillus. Its function is as follows. Myosins are actin-based motor molecules with ATPase activity. Unconventional myosins serve in intracellular movements: can function in cells as a single-molecule cargo transporter. A very slow and high-duty-ratio motor, may be suitable for tension maintenance of actin filaments. Their highly divergent tails are presumed to bind to membranous compartments, which would be moved relative to actin filaments. Plays a key role in the formation of cellular projections and other actin-based functions required for embryonic and larval viability. Necessary for auditory transduction: plays a role in Johnston's organ organization by functioning in scolopidial apical attachment and therefore to acoustic stimulus propagation from the antenna a2/a3 joint to transducing elements. Interaction with the myosin zip may be important for its function in scolopidial apical attachment. During oogenesis it has Cad99c-dependent and Cad99c-independent roles in regulating the shape and spacing of the follicle cell microvilli which secrete eggshell material such as the vitelline membrane. May be required for the normal expression of Cad99c in the follicle cell microvilli. The protein is Myosin-VIIa of Drosophila melanogaster (Fruit fly).